A 322-amino-acid polypeptide reads, in one-letter code: Apolipoprotein E (322 aa).

The first 18 residues, 1 to 18 (MKVLWAALLVAFLAGCQG), serve as a signal peptide directing secretion. 8 tandem repeats follow at residues 84–105 (ALMDETMKELKAYKSELEEQLS), 106–127 (PVAEETRARLSKELQAAQARLG), 128–149 (ADMEDVRSRLAXYRSEVQAMLG), 150–171 (QSXDELRARLASHLRKLRKRLL), 172–193 (RDVDDLQKRLAVYQAGAREGAE), 194–215 (RGVSAIRERLVPLVEQGRARAA), 216–238 (TVGSSLAGQPLQERAQAWGERLR), and 239–260 (ARMEEVGSRTRDRLDEVKEQVE). Residues 84–260 (ALMDETMKEL…RLDEVKEQVE (177 aa)) are 8 X 22 AA approximate tandem repeats. The residue at position 147 (M147) is a Methionine sulfoxide. At S151 the chain carries Phosphoserine. An LDL and other lipoprotein receptors binding region spans residues 162–172 (HLRKLRKRLLR). A heparin-binding site is contributed by 166-169 (LRKR). The segment at 214–295 (AATVGSSLAG…SWFEPLVEDM (82 aa)) is lipid-binding and lipoprotein association. O-linked (GalNAc...) threonine glycosylation is present at T216. 234-241 (GERLRARM) serves as a coordination point for heparin. The homooligomerization stretch occupies residues 271 to 322 (QQMRLQAEAFQARLKSWFEPLVEDMQRQWAGLVEKVQAAVGASAAPVPGDNH). The tract at residues 283–295 (RLKSWFEPLVEDM) is specificity for association with VLDL.

The protein belongs to the apolipoprotein A1/A4/E family. Homotetramer. May interact with ABCA1; functionally associated with ABCA1 in the biogenesis of HDLs. May interact with APP/A4 amyloid-beta peptide; the interaction is extremely stable in vitro but its physiological significance is unclear. May interact with MAPT. May interact with MAP2. In the cerebrospinal fluid, interacts with secreted SORL1. Interacts with PMEL; this allows the loading of PMEL luminal fragment on ILVs to induce fibril nucleation. In terms of processing, APOE exists as multiple glycosylated and sialylated glycoforms within cells and in plasma. The extent of glycosylation and sialylation are tissue and context specific. Glycated in plasma VLDL. Post-translationally, phosphorylated by FAM20C in the extracellular medium.

The protein localises to the secreted. The protein resides in the extracellular space. It localises to the extracellular matrix. Its subcellular location is the extracellular vesicle. It is found in the endosome. The protein localises to the multivesicular body. Its function is as follows. APOE is an apolipoprotein, a protein associating with lipid particles, that mainly functions in lipoprotein-mediated lipid transport between organs via the plasma and interstitial fluids. APOE is a core component of plasma lipoproteins and is involved in their production, conversion and clearance. Apolipoproteins are amphipathic molecules that interact both with lipids of the lipoprotein particle core and the aqueous environment of the plasma. As such, APOE associates with chylomicrons, chylomicron remnants, very low density lipoproteins (VLDL) and intermediate density lipoproteins (IDL) but shows a preferential binding to high-density lipoproteins (HDL). It also binds a wide range of cellular receptors including the LDL receptor/LDLR, the LDL receptor-related proteins LRP1, LRP2 and LRP8 and the very low-density lipoprotein receptor/VLDLR that mediate the cellular uptake of the APOE-containing lipoprotein particles. Finally, APOE also has a heparin-binding activity and binds heparan-sulfate proteoglycans on the surface of cells, a property that supports the capture and the receptor-mediated uptake of APOE-containing lipoproteins by cells. A main function of APOE is to mediate lipoprotein clearance through the uptake of chylomicrons, VLDLs, and HDLs by hepatocytes. APOE is also involved in the biosynthesis by the liver of VLDLs as well as their uptake by peripheral tissues ensuring the delivery of triglycerides and energy storage in muscle, heart and adipose tissues. By participating in the lipoprotein-mediated distribution of lipids among tissues, APOE plays a critical role in plasma and tissues lipid homeostasis. APOE is also involved in two steps of reverse cholesterol transport, the HDLs-mediated transport of cholesterol from peripheral tissues to the liver, and thereby plays an important role in cholesterol homeostasis. First, it is functionally associated with ABCA1 in the biogenesis of HDLs in tissues. Second, it is enriched in circulating HDLs and mediates their uptake by hepatocytes. APOE also plays an important role in lipid transport in the central nervous system, regulating neuron survival and sprouting. In Ateles geoffroyi (Black-handed spider monkey), this protein is Apolipoprotein E (APOE).